The chain runs to 140 residues: MKFTTGLSVLLFFVLQVFAEKLTELVVGVTKEPVDCKIKASKGDVVSVHYTGKLRDSGEIFDSSYNRGVPIQFKLGYSQVISGWDQGILGMCIGEGRTLHIPSELGYGSRGAGSVIPPDADLIFETELVDIQREAVDDEL.

Positions 1–19 are cleaved as a signal peptide; that stretch reads MKFTTGLSVLLFFVLQVFA. The PPIase FKBP-type domain occupies 43–132; sequence GDVVSVHYTG…IFETELVDIQ (90 aa).

It belongs to the FKBP-type PPIase family. FKBP2 subfamily.

The protein resides in the endoplasmic reticulum. It carries out the reaction [protein]-peptidylproline (omega=180) = [protein]-peptidylproline (omega=0). Its activity is regulated as follows. Inhibited by both FK506 and rapamycin. Its function is as follows. PPIases accelerate the folding of proteins. It catalyzes the cis-trans isomerization of proline imidic peptide bonds in oligopeptides. The chain is FK506-binding protein 2 (FPR2) from Kluyveromyces lactis (strain ATCC 8585 / CBS 2359 / DSM 70799 / NBRC 1267 / NRRL Y-1140 / WM37) (Yeast).